A 637-amino-acid chain; its full sequence is Protein kinase domain-containing protein ppk3 (637 aa).

One can recognise a Protein kinase domain in the interval 1-296 (MDFIKSAASF…QLLSSKLEVI (296 aa)). An HEAT repeat occupies 414–450 (KTLNNELLRSLAVVQNDQHPTLRTNSTICLGKIAEYL). Residues 576 to 586 (NDTTEIKEKKN) show a composition bias toward basic and acidic residues. Residues 576–637 (NDTTEIKEKK…ENNVEESWGL (62 aa)) form a disordered region. A compositionally biased stretch (acidic residues) spans 608–631 (ETEEQIDESWMENWNDEEETENNV).

Its subcellular location is the golgi apparatus. The protein is Protein kinase domain-containing protein ppk3 (ppk3) of Schizosaccharomyces pombe (strain 972 / ATCC 24843) (Fission yeast).